Reading from the N-terminus, the 911-residue chain is DNA ligase 4 (911 aa).

12 residues coordinate ATP: Glu-271, Thr-272, Lys-273, Leu-274, Arg-278, Glu-331, Lys-345, Phe-367, Glu-427, Lys-432, Lys-449, and Lys-451. Lys-273 serves as the catalytic N6-AMP-lysine intermediate. Glu-331 is a Mg(2+) binding site. Glu-427 contacts Mg(2+). The tract at residues 610–620 (LASKHLYIGGD) is required for catalytic activity. BRCT domains lie at 654–743 (KISN…PRFM) and 808–911 (SPLS…QYLI).

It belongs to the ATP-dependent DNA ligase family. As to quaternary structure, interacts with XRCC4; the LIG4-XRCC4 subcomplex has a 1:2 stoichiometry and XRCC4 is required for LIG4 stability. Component of the core long-range non-homologous end joining (NHEJ) complex (also named DNA-PK complex) composed of PRKDC, LIG4, XRCC4, XRCC6/Ku70, XRCC5/Ku86 and NHEJ1/XLF. Additional component of the NHEJ complex includes PAXX. Following autophosphorylation, PRKDC dissociates from DNA, leading to formation of the short-range NHEJ complex, composed of LIG4, XRCC4, XRCC6/Ku70, XRCC5/Ku86 and NHEJ1/XLF. Interacts with DCLRE1C; the interaction is direct. Interacts with APLF. The cofactor is Mg(2+). In terms of tissue distribution, testis, thymus, prostate and heart.

The protein resides in the nucleus. The catalysed reaction is ATP + (deoxyribonucleotide)n-3'-hydroxyl + 5'-phospho-(deoxyribonucleotide)m = (deoxyribonucleotide)n+m + AMP + diphosphate.. Its function is as follows. DNA ligase involved in DNA non-homologous end joining (NHEJ); required for double-strand break (DSB) repair and V(D)J recombination. Catalyzes the NHEJ ligation step of the broken DNA during DSB repair by resealing the DNA breaks after the gap filling is completed. Joins single-strand breaks in a double-stranded polydeoxynucleotide in an ATP-dependent reaction. LIG4 is mechanistically flexible: it can ligate nicks as well as compatible DNA overhangs alone, while in the presence of XRCC4, it can ligate ends with 2-nucleotides (nt) microhomology and 1-nt gaps. Forms a subcomplex with XRCC4; the LIG4-XRCC4 subcomplex is responsible for the NHEJ ligation step and XRCC4 enhances the joining activity of LIG4. Binding of the LIG4-XRCC4 complex to DNA ends is dependent on the assembly of the DNA-dependent protein kinase complex DNA-PK to these DNA ends. LIG4 regulates nuclear localization of XRCC4. The protein is DNA ligase 4 of Homo sapiens (Human).